The primary structure comprises 195 residues: Protein LIGHT-DEPENDENT SHORT HYPOCOTYLS 4 (195 aa).

Residues 28–38 are compositionally biased toward low complexity; the sequence is TTTSSSSSSSS. Disordered regions lie at residues 28 to 51 and 162 to 195; these read TTTSSSSSSSSGGSGTNQLSRYEN and SQAKARGISYEKKKRKRPPPPLPPAQPAISSSPN. Residues 48–175 enclose the ALOG domain; that stretch reads RYENQKRRDW…ARGISYEKKK (128 aa). Positions 173–177 match the Nuclear localization signal motif; the sequence is KKKRK.

Belongs to the plant homeotic and developmental regulators ALOG protein family. As to expression, induced by NAC054/CUC1 and NAC098/CUC2 in shoot organ boundary cells.

It localises to the nucleus. In terms of biological role, probable transcription regulator that acts as a developmental regulator by promoting cell growth in response to light. May suppress organ differentiation in the boundary region. In Arabidopsis thaliana (Mouse-ear cress), this protein is Protein LIGHT-DEPENDENT SHORT HYPOCOTYLS 4 (LSH4).